A 473-amino-acid polypeptide reads, in one-letter code: Bifunctional protein HldE (473 aa).

Residues 1-316 form a ribokinase region; the sequence is MILPDFSLAR…AIAIHGQRAP (316 aa). ATP is bound at residue 193–196; the sequence is NLSE. Residue aspartate 262 is part of the active site. The segment at 342–473 is cytidylyltransferase; the sequence is VTNGCFDLLH…TRIIEAIRNG (132 aa).

It in the N-terminal section; belongs to the carbohydrate kinase PfkB family. In the C-terminal section; belongs to the cytidylyltransferase family. Homodimer.

It carries out the reaction D-glycero-beta-D-manno-heptose 7-phosphate + ATP = D-glycero-beta-D-manno-heptose 1,7-bisphosphate + ADP + H(+). It catalyses the reaction D-glycero-beta-D-manno-heptose 1-phosphate + ATP + H(+) = ADP-D-glycero-beta-D-manno-heptose + diphosphate. It participates in nucleotide-sugar biosynthesis; ADP-L-glycero-beta-D-manno-heptose biosynthesis; ADP-L-glycero-beta-D-manno-heptose from D-glycero-beta-D-manno-heptose 7-phosphate: step 1/4. Its pathway is nucleotide-sugar biosynthesis; ADP-L-glycero-beta-D-manno-heptose biosynthesis; ADP-L-glycero-beta-D-manno-heptose from D-glycero-beta-D-manno-heptose 7-phosphate: step 3/4. Catalyzes the phosphorylation of D-glycero-D-manno-heptose 7-phosphate at the C-1 position to selectively form D-glycero-beta-D-manno-heptose-1,7-bisphosphate. Its function is as follows. Catalyzes the ADP transfer from ATP to D-glycero-beta-D-manno-heptose 1-phosphate, yielding ADP-D-glycero-beta-D-manno-heptose. The chain is Bifunctional protein HldE from Methylococcus capsulatus (strain ATCC 33009 / NCIMB 11132 / Bath).